Consider the following 264-residue polypeptide: Isoprenyl transferase (264 aa).

Residue D43 is part of the active site. D43 serves as a coordination point for Mg(2+). Substrate-binding positions include 44 to 47, W48, R56, H60, and 88 to 90; these read GNGR and STE. N91 (proton acceptor) is an active-site residue. Substrate-binding positions include W92, R94, R211, and 217-219; that span reads RTS. Residue E230 participates in Mg(2+) binding.

Belongs to the UPP synthase family. In terms of assembly, homodimer. It depends on Mg(2+) as a cofactor.

In terms of biological role, catalyzes the condensation of isopentenyl diphosphate (IPP) with allylic pyrophosphates generating different type of terpenoids. The sequence is that of Isoprenyl transferase from Bifidobacterium longum (strain NCC 2705).